The sequence spans 178 residues: Adenine phosphoribosyltransferase (178 aa).

The protein belongs to the purine/pyrimidine phosphoribosyltransferase family. In terms of assembly, homodimer.

It is found in the cytoplasm. The catalysed reaction is AMP + diphosphate = 5-phospho-alpha-D-ribose 1-diphosphate + adenine. The protein operates within purine metabolism; AMP biosynthesis via salvage pathway; AMP from adenine: step 1/1. Its function is as follows. Catalyzes a salvage reaction resulting in the formation of AMP, that is energically less costly than de novo synthesis. This chain is Adenine phosphoribosyltransferase, found in Bacteroides fragilis (strain YCH46).